A 533-amino-acid polypeptide reads, in one-letter code: DELLA protein GAI (533 aa).

Residues Met-1–Asp-12 show a composition bias toward basic residues. The disordered stretch occupies residues Met-1–Gly-24. The short motif at Asp-28 to Ala-32 is the DELLA motif element. Positions Leu-50–Glu-54 match the LEXLE motif motif. Residues Val-73 to Pro-77 carry the VHYNP motif motif. The 370-residue stretch at Val-160–Lys-529 folds into the GRAS domain. Residues Val-167–Ile-221 are leucine repeat I (LRI). Residues Leu-174–Glu-178 carry the LxCxE motif motif. The interval Gln-240–Gly-305 is VHIID. The VHIID signature appears at Val-271 to Asp-275. Residues Glu-319–Ser-351 are leucine repeat II (LRII). The PFYRE stretch occupies residues Val-363 to Asn-450. The LXXLL motif signature appears at Leu-371–Leu-375. Residues Ala-453–Lys-529 form an SAW region.

Belongs to the GRAS family. DELLA subfamily. As to quaternary structure, interacts directly with the GID2/SLY1 component of the SCF(GID2) complex. Interacts (via N-terminus) with GID1A, GID1B and GID1B (via N-terminus). Interacts with the BOI proteins BOI, BRG1, BRG2, BRG3 and NUP58. Interacts with TOPP4. Interacts with TCP14 and TCP15. Interacts with FLZ5. Binds to and coactivates GAF1/IDD2 and ENY/IDD1 at the promoter of GA20OX2 gene. Binds to PDF2 and ATML1. Interacts with the prefoldin alpha subunits PFD3 and PFD5 in the nucleus. In terms of processing, phosphorylated. Post-translationally, gibberellin (GA) induces dephosphorylation of GAI by TOPP4 and subsequent degradation by the proteasomal pathway. May be ubiquitinated, as suggested by its interaction with GID2. Ubiquitination is however unsure since in contrast to other DELLA proteins, it is not ubiquitinated and degraded upon GA application. Nevertheless, ubiquitination may be triggered by other processes. In terms of tissue distribution, ubiquitously expressed. Expressed in rosette leaves, roots, stems and inflorescences of greenhouse grown.

It localises to the nucleus. Its activity is regulated as follows. Transcription activation is repressed by gibberellic acid GA(3) in the presence of TPR4. Transcriptional regulator that acts as a repressor of the gibberellin (GA) signaling pathway. Transcription coactivator of the zinc finger transcription factors GAF1/IDD2 and ENY/IDD1 in regulation of gibberellin homeostasis and signaling. No effect of the BOI proteins on its stability. Probably acts by participating in large multiprotein complexes that repress transcription of GA-inducible genes. Positively regulates XERICO expression. In contrast to RGA, it is less sensitive to GA. Its activity is probably regulated by other phytohormones such as auxin and ethylene. Involved in the regulation of seed dormancy and germination, including glucose-induced delay of seed germination. Involved in the process leading to microtubules (MTs) dissociation in response to gibberellic acid (GA) probably by mediating the translocation of the prefoldin co-chaperone complex from the cytoplasm to the nucleus. This Arabidopsis thaliana (Mouse-ear cress) protein is DELLA protein GAI.